Consider the following 461-residue polypeptide: ERBB receptor feedback inhibitor 1 (461 aa).

Serine 2 is subject to N-acetylserine. Phosphothreonine occurs at positions 126 and 130. Positions glutamine 228–proline 353 are disordered. Serine 251 and serine 272 each carry phosphoserine. Positions serine 265–serine 274 are enriched in polar residues. Residues proline 283–proline 292 show a composition bias toward pro residues. The residue at position 301 (serine 301) is a Phosphoserine. A compositionally biased stretch (basic and acidic residues) spans aspartate 311 to leucine 324. Polar residues predominate over residues serine 325–serine 336. The interval serine 333–alanine 362 is interaction with EGFR and ERBB2 and regulation of EGFR activation. Serine 460 is subject to Phosphoserine.

The protein belongs to the MIG6 family. In terms of assembly, interacts with EGFR. Interacts with ERBB2. Detected in lung, in airway epithelial cells and alveolar type 2 cells (at protein level). Detected in uterus stroma, luminal epithelium and glandular epithelium.

The protein resides in the cytoplasm. It localises to the cell membrane. The protein localises to the nucleus. Functionally, negative regulator of EGFR signaling in skin morphogenesis. Acts as a negative regulator for several EGFR family members, including ERBB2, ERBB3 and ERBB4. Inhibits EGFR catalytic activity by interfering with its dimerization. Inhibits autophosphorylation of EGFR, ERBB2 and ERBB4. Important for normal keratinocyte proliferation and differentiation. Plays a role in modulating the response to steroid hormones in the uterus. Required for normal response to progesterone in the uterus and for fertility. Mediates epithelial estrogen responses in the uterus by regulating ESR1 levels and activation. Important for regulation of endometrium cell proliferation. Important for normal prenatal and perinatal lung development. In Mus musculus (Mouse), this protein is ERBB receptor feedback inhibitor 1 (Errfi1).